Here is a 625-residue protein sequence, read N- to C-terminus: Chaperone protein DnaK (625 aa).

Thr-197 carries the post-translational modification Phosphothreonine; by autocatalysis. Residues 598–625 (AYAKEQGGTQQGTDTKKKDDDVIDAEVE) form a disordered region.

It belongs to the heat shock protein 70 family.

Its function is as follows. Acts as a chaperone. In Helicobacter hepaticus (strain ATCC 51449 / 3B1), this protein is Chaperone protein DnaK.